The sequence spans 505 residues: uncharacterized protein (505 aa).

An N-terminal signal peptide occupies residues 1–19 (MILFTAIILVASVVHVVVS). At 20-483 (SPQQCYYCVE…EQPNSAPRGE (464 aa)) the chain is on the extracellular side. Residues 484 to 504 (IHQLFRCTFVAVFIVFACFIV) traverse the membrane as a helical segment. C505 is a topological domain (cytoplasmic).

Component of the acid-insoluble and acid-soluble organic matrix of the aragonitic skeleton (at protein level).

The protein localises to the membrane. This is an uncharacterized protein from Acropora millepora (Staghorn coral).